A 358-amino-acid polypeptide reads, in one-letter code: Insulin gene enhancer protein isl-2b (358 aa).

2 LIM zinc-binding domains span residues 27-80 and 89-143; these read CVGC…CKRD and CAKC…RADH. The segment at residues 191-250 is a DNA-binding region (homeobox); the sequence is TTRVRTVLNEKQLHTLRTCYNANPRPDALMKEQLVEMTGLSPRVIRVWFQNKRCKDKKRS. Positions 325–335 are enriched in low complexity; the sequence is ESGSLGNSSGS. The disordered stretch occupies residues 325–358; that stretch reads ESGSLGNSSGSDVTSLSSQLPDTPNSMVPSPVET. Residues 336–358 show a composition bias toward polar residues; the sequence is DVTSLSSQLPDTPNSMVPSPVET.

It localises to the nucleus. Functionally, binds to one of the cis-acting domain of the insulin gene enhancer. May be involved in the regional specification of the myotome and also in target recognition by the caudal primary neuron. The polypeptide is Insulin gene enhancer protein isl-2b (isl2b) (Danio rerio (Zebrafish)).